The following is a 155-amino-acid chain: Small ribosomal subunit protein uS7cz/uS7cy (155 aa).

It belongs to the universal ribosomal protein uS7 family. As to quaternary structure, part of the 30S ribosomal subunit.

It localises to the plastid. The protein localises to the chloroplast. Its function is as follows. One of the primary rRNA binding proteins, it binds directly to 16S rRNA where it nucleates assembly of the head domain of the 30S subunit. This chain is Small ribosomal subunit protein uS7cz/uS7cy (rps7-A), found in Lactuca sativa (Garden lettuce).